A 158-amino-acid chain; its full sequence is uncharacterized protein (158 aa).

Its function is as follows. The presence of the two linear plasmids, termed pGKL1 and pGKL2, in strains of Kluyveromyces lactis confers the killer phenotype to the host cell, by promoting the secretion of a toxin able to inhibit the growth of sensitive strains. This is an uncharacterized protein from Kluyveromyces lactis (strain ATCC 8585 / CBS 2359 / DSM 70799 / NBRC 1267 / NRRL Y-1140 / WM37) (Yeast).